Here is a 234-residue protein sequence, read N- to C-terminus: Sugar fermentation stimulation protein A (234 aa).

Positions 201–220 form a DNA-binding region, H-T-H motif; that stretch reads LLSEAQNKGVEVLAYKAELS.

Belongs to the SfsA family.

In terms of biological role, binds to DNA non-specifically. Could be a regulatory factor involved in maltose metabolism. This is Sugar fermentation stimulation protein A from Salmonella dublin (strain CT_02021853).